The primary structure comprises 101 residues: MAKQSMKAREVVRVKLADKYRAKREELKAIISSVNSSDEDRWNAVLKLQSLPRDSSPSRQRKRCRQTGRPHGYVGKFGLSRIKLREAAMRGEVPGLKKASW.

Positions 50-70 (SLPRDSSPSRQRKRCRQTGRP) are disordered. A compositionally biased stretch (basic residues) spans 59–68 (RQRKRCRQTG).

It belongs to the universal ribosomal protein uS14 family. Part of the 30S ribosomal subunit. Contacts proteins S3 and S10.

Functionally, binds 16S rRNA, required for the assembly of 30S particles and may also be responsible for determining the conformation of the 16S rRNA at the A site. This is Small ribosomal subunit protein uS14 from Erwinia tasmaniensis (strain DSM 17950 / CFBP 7177 / CIP 109463 / NCPPB 4357 / Et1/99).